A 493-amino-acid chain; its full sequence is MDASAEQSLPEPGSQDSVAGEDIEIVVNVGGVRQVLYGDLLSQYPETRLAELINCLAGGYDTIFSLCDDYDPGKREFYFDRDPDAFKCVIEVYYFGEVHMKKGICPICFKNEMDFWKVDLKFLDDCCKSHLSEKREELEEIARRVQLILDDLGVDAAEGRWRRCQKCVWKFLEKPESSCPARVVAVLSFLLILVSSVVMCMGTIPELQVVDSEGNRVEHPTLENVETACIGWFTLEYLLRLFSSPNKLHFALSFMNIVDVLAILPFYVSLTLTHLGARMMELTNVQQAVQALRIMRIARIFKLARHSSGLQTLTYALKRSFKELGLLLMYLAVGIFVFSALGYTMEQSHPETLFKSIPQSFWWAIITMTTVGYGDIYPKTTLGKLNAAISFLCGVIAIALPIHPIINNFVRYYNKQRVLETAAKHELELMELNSSSAEGKPGGSRSDLDTLPPEPAAREGPSWGSRLKLSHSDTFIPLLTEEKHHRTRLQSCK.

Residues 1-183 (MDASAEQSLP…KPESSCPARV (183 aa)) lie on the Cytoplasmic side of the membrane. A helical membrane pass occupies residues 184-204 (VAVLSFLLILVSSVVMCMGTI). A helical membrane pass occupies residues 224–244 (NVETACIGWFTLEYLLRLFSS). At 245–249 (PNKLH) the chain is on the cytoplasmic side. The chain crosses the membrane as a helical span at residues 250–270 (FALSFMNIVDVLAILPFYVSL). The chain crosses the membrane as a helical; Voltage-sensor span at residues 290–310 (QALRIMRIARIFKLARHSSGL). Over 311 to 324 (QTLTYALKRSFKEL) the chain is Cytoplasmic. A helical membrane pass occupies residues 325-345 (GLLLMYLAVGIFVFSALGYTM). The pore-forming intramembrane region spans 358–378 (PQSFWWAIITMTTVGYGDIYP). Positions 370–375 (TVGYGD) match the Selectivity filter motif. Residues 386–406 (NAAISFLCGVIAIALPIHPII) form a helical membrane-spanning segment. The Cytoplasmic segment spans residues 407–493 (NNFVRYYNKQ…HHRTRLQSCK (87 aa)). The disordered stretch occupies residues 434–468 (SSSAEGKPGGSRSDLDTLPPEPAAREGPSWGSRLK).

It belongs to the potassium channel family. F (TC 1.A.1.2) subfamily. Kv5.1/KCNF1 sub-subfamily. Heterotetramer with KCNB1 or KCNB2.

The protein resides in the cell membrane. Functionally, regulatory alpha-subunit of the voltage-gated potassium (Kv) channel which, when coassembled with KCNB1 or KCNB2, can modulate their expression and their gating kinetics by acting on deactivation upon repolarization and inactivation during maintained depolarization. Accelerates inactivation but has relatively little effect on deactivation. Coexpression with KCNB1 or KCNB2 markedly slows inactivation. Each modulatory subunit has its own specific properties of regulation, and can lead to extensive inhibitions, to large changes in kinetics, and/or to large shifts in the voltage dependencies of the inactivation process. The gating kinetics depends on the nature and stoichiometry of the associated regulatory sunbunit. Fails to produce a potassium current when expressed alone. In Mus musculus (Mouse), this protein is Voltage-gated potassium channel regulatory subunit KCNF1.